Reading from the N-terminus, the 246-residue chain is Ribonuclease PH (246 aa).

Residues Arg-91 and 129–131 contribute to the phosphate site; that span reads GTR.

The protein belongs to the RNase PH family. Homohexameric ring arranged as a trimer of dimers.

It carries out the reaction tRNA(n+1) + phosphate = tRNA(n) + a ribonucleoside 5'-diphosphate. Its function is as follows. Phosphorolytic 3'-5' exoribonuclease that plays an important role in tRNA 3'-end maturation. Removes nucleotide residues following the 3'-CCA terminus of tRNAs; can also add nucleotides to the ends of RNA molecules by using nucleoside diphosphates as substrates, but this may not be physiologically important. Probably plays a role in initiation of 16S rRNA degradation (leading to ribosome degradation) during starvation. In Burkholderia ambifaria (strain MC40-6), this protein is Ribonuclease PH.